Here is a 134-residue protein sequence, read N- to C-terminus: Transcription antitermination protein NusB (134 aa).

It belongs to the NusB family.

Involved in transcription antitermination. Required for transcription of ribosomal RNA (rRNA) genes. Binds specifically to the boxA antiterminator sequence of the ribosomal RNA (rrn) operons. The chain is Transcription antitermination protein NusB from Halalkalibacterium halodurans (strain ATCC BAA-125 / DSM 18197 / FERM 7344 / JCM 9153 / C-125) (Bacillus halodurans).